The chain runs to 297 residues: MRTKKRTKEMLPIFDQKKVAFIGAGSMAEGMISGIVRANKIPKQNICVTNRSNTERLTELELQYGIKGALPNQLCIEDMDVLILAMKPKDAENALSSLKSRIQPHQLILSVLAGITTSFIEQSLLNEQPVVRVMPNTSSMIGASATAIALGKYVSEDLKKLAEALLGCMGEVYTIQENQMDIFTGIAGSGPAYFYYLMEFIEKTGEEAGLDKQLSRSIGAQTLLGAAKMLMETGEHPEILRDNITSPNGTTAAGLQALKKSGGGEAISQAIKHAAKRSKEISEDIEKTAAPLSGVIK.

This sequence belongs to the pyrroline-5-carboxylate reductase family.

It localises to the cytoplasm. It carries out the reaction L-proline + NADP(+) = (S)-1-pyrroline-5-carboxylate + NADPH + 2 H(+). The catalysed reaction is L-proline + NAD(+) = (S)-1-pyrroline-5-carboxylate + NADH + 2 H(+). It functions in the pathway amino-acid biosynthesis; L-proline biosynthesis; L-proline from L-glutamate 5-semialdehyde: step 1/1. In terms of biological role, catalyzes the reduction of 1-pyrroline-5-carboxylate (PCA) to L-proline. The chain is Pyrroline-5-carboxylate reductase 1 (proH) from Bacillus subtilis (strain 168).